The chain runs to 481 residues: Keratin, type I cytoskeletal 39 (481 aa).

A disordered region spans residues 1–25; that stretch reads MDTKGSTVTISSSTPPQNCSGNTNV. The head stretch occupies residues 1 to 90; the sequence is MDTKGSTVTI…RCSDGINSHE (90 aa). The region spanning 90 to 401 is the IF rod domain; that stretch reads EKETMQILNE…SLLESLDGRL (312 aa). The tract at residues 91-125 is coil 1A; it reads KETMQILNERLASYLEKVRMLEGENADLEDKIQEE. A linker 1 region spans residues 126–136; that stretch reads CSKTLPILCPD. Residues 137 to 237 are coil 1B; that stretch reads YLSYYTTIEQ…HEEEINSLQC (101 aa). Positions 238-253 are linker 12; sequence QLGDRINIEVTAAPSV. A coil 2 region spans residues 254-397; sequence DLNQILQKMR…ATYRSLLESL (144 aa). A tail region spans residues 398 to 481; that stretch reads DGRLPCNPCT…PCYITRPAKV (84 aa).

Belongs to the intermediate filament family. In terms of assembly, heterotetramer of two type I and two type II keratins.

Functionally, may play a role in late hair differentiation. The chain is Keratin, type I cytoskeletal 39 (Krt39) from Rattus norvegicus (Rat).